A 1207-amino-acid polypeptide reads, in one-letter code: AP-3 complex subunit delta-1 (1207 aa).

At alanine 2 the chain carries N-acetylalanine. 9 HEAT repeats span residues 34-71 (KYIS…LGYD), 142-179 (DLAR…KYPE), 180-216 (SLRP…RNPK), 218-254 (YLSL…LEPR), 257-296 (KKLI…GMPN), 298-336 (SASI…THPK), 337-373 (SVQA…KKNL), 375-409 (EIVK…QSNY), and 521-558 (VYVQ…ERLP). Disordered stretches follow at residues 630–695 (PLSD…RYQD) and 731–970 (RRHR…EEPL). A phosphoserine mark is found at serine 632, serine 634, and serine 636. The segment covering 648–675 (EEQRHTKPRAPEADEQELARRREARRQE) has biased composition (basic and acidic residues). Residues 659–679 (EADEQELARRREARRQEQANN) adopt a coiled-coil conformation. Serine 688 carries the phosphoserine modification. Residues 725–752 (VKLEEERRHRQRLEKDKRKKKKRERERR) are a coiled coil. A compositionally biased stretch (basic and acidic residues) spans 731–740 (RRHRQRLEKD). Basic residues predominate over residues 741–759 (KRKKKKRERERRGTRRHSS). Serine 758 and serine 759 each carry phosphoserine. Threonine 762 is subject to Phosphothreonine. Phosphoserine occurs at positions 764, 788, and 829. Over residues 777 to 794 (VTEEMPENALPSDEDDKD) the composition is skewed to acidic residues. Basic and acidic residues predominate over residues 795–840 (PNDPYRALDIDLDKPLADSEKLPVQKHRNAETSKSPEKEDVPLVEK). Residues 841–854 (KSKKPKKKEKKHKE) are compositionally biased toward basic residues. A coiled-coil region spans residues 846–870 (KKKEKKHKEKEREKKKKEVEKGEDL). Composition is skewed to basic and acidic residues over residues 855-869 (KERE…KGED) and 899-908 (EGQEEPRGEE). A compositionally biased stretch (basic residues) spans 923–933 (PSKHKKKKHKK). The span at 952–969 (ADEEAAEPVENGTLEEEP) shows a compositional bias: acidic residues.

Belongs to the adaptor complexes large subunit family. As to quaternary structure, AP-3 associates with the BLOC-1 complex. Adaptor protein complex 3 (AP-3) is a heterotetramer composed of two large adaptins (delta-type subunit AP3D1 and beta-type subunit AP3B1 or AP3B2), a medium adaptin (mu-type subunit AP3M1 or AP3M2) and a small adaptin (sigma-type subunit APS1 or AP3S2). Interacts with SLC30A2. Interacts with CLN3 (via dileucine motif); this interaction facilitates lysosomal targeting.

The protein resides in the cytoplasm. The protein localises to the golgi apparatus membrane. In terms of biological role, part of the AP-3 complex, an adaptor-related complex which is not clathrin-associated. The complex is associated with the Golgi region as well as more peripheral structures. It facilitates the budding of vesicles from the Golgi membrane and may be directly involved in trafficking to lysosomes. Involved in process of CD8+ T-cell and NK cell degranulation. In concert with the BLOC-1 complex, AP-3 is required to target cargos into vesicles assembled at cell bodies for delivery into neurites and nerve terminals. In Bos taurus (Bovine), this protein is AP-3 complex subunit delta-1 (AP3D1).